A 458-amino-acid chain; its full sequence is Neuronal acetylcholine receptor subunit beta-3 (458 aa).

The first 21 residues, 1–21, serve as a signal peptide directing secretion; that stretch reads MLPDFMLVLIVLGIPSSATTG. The Extracellular segment spans residues 22–237; it reads FNSIAENEDA…VLRRLPLFYT (216 aa). N-linked (GlcNAc...) asparagine glycans are attached at residues asparagine 51, asparagine 138, and asparagine 166. Cysteine 153 and cysteine 167 form a disulfide bridge. 3 helical membrane-spanning segments follow: residues 238–258, 267–287, and 300–320; these read LFLI…FYLP, LSTS…EIIP, and LLFI…VINV. The Cytoplasmic portion of the chain corresponds to 321–428; that stretch reads HHRSSSTYHP…WKFVAQVLDR (108 aa). The helical transmembrane segment at 429–449 threads the bilayer; the sequence is IFLWLFLIVSVTGSVLIFTPA.

The protein belongs to the ligand-gated ion channel (TC 1.A.9) family. Acetylcholine receptor (TC 1.A.9.1) subfamily. Beta-3/CHRNB3 sub-subfamily. In terms of assembly, neuronal AChR seems to be composed of two different type of subunits: alpha and beta. CHRNB3/beta-3 subunit is only able to form functional nAChRs when co-assembled with another beta subunit. Participates in pentameric assemblies along with CHRNA4/alpha-4 and CHRNB2/beta-2 subunits and with CHRNA6/alpha-6 as well, forming stoichiometries such as (CHRNA3:CHRNB4)2:CHRNB3, (CHRNA4:CHRNB2)2:CHRNB3 or (CHRNA6:CHRNB2)2:CHRNB3.

Its subcellular location is the synaptic cell membrane. It localises to the cell membrane. The enzyme catalyses Ca(2+)(in) = Ca(2+)(out). It catalyses the reaction K(+)(in) = K(+)(out). It carries out the reaction Na(+)(in) = Na(+)(out). Its activity is regulated as follows. Activated by a myriad of ligands such as acetylcholine, cytisine, nicotine, choline and epibatidine. Component of neuronal acetylcholine receptors (nAChRs) that function as pentameric, ligand-gated cation channels with high calcium permeability among other activities. nAChRs are excitatory neurotrasnmitter receptors formed by a collection of nAChR subunits known to mediate synaptic transmission in the nervous system and the neuromuscular junction. Each nAchR subunit confers differential attributes to channel properties, including activation, deactivation and desensitization kinetics, pH sensitivity, cation permeability, and binding to allosteric modulators. Has an accessory rather than functional role and is only able to form functional nAChRs when co-assembled with another beta subunit. Participates in pentameric assemblies along with CHRNA3, CHRNA4, CHRNA6, CHRNB2 and CHRNB4. Modulates receptor assembly and increases receptor sensitivity to nicotine when associated with CHRNB2, CHRNA4 and/or CHRNA6 as well as CHRNA3 and CHRNB4. Seems to play a role in nicotine addiction. This chain is Neuronal acetylcholine receptor subunit beta-3, found in Homo sapiens (Human).